Consider the following 160-residue polypeptide: Cytochrome b6-f complex subunit 4 (160 aa).

A run of 3 helical transmembrane segments spans residues 36–56, 95–115, and 131–151; these read LLYIFPVVILGTIACNVGLAV, LLGVLLMVSVPTGLLTVPFLE, and TVFLIGTAVALWLGIGATLPI.

The protein belongs to the cytochrome b family. PetD subfamily. As to quaternary structure, the 4 large subunits of the cytochrome b6-f complex are cytochrome b6, subunit IV (17 kDa polypeptide, petD), cytochrome f and the Rieske protein, while the 4 small subunits are petG, petL, petM and petN. The complex functions as a dimer.

It is found in the plastid. It localises to the chloroplast thylakoid membrane. Functionally, component of the cytochrome b6-f complex, which mediates electron transfer between photosystem II (PSII) and photosystem I (PSI), cyclic electron flow around PSI, and state transitions. The polypeptide is Cytochrome b6-f complex subunit 4 (Oryza nivara (Indian wild rice)).